A 145-amino-acid chain; its full sequence is Photosystem I reaction center subunit VI-1, chloroplastic (145 aa).

A chloroplast-targeting transit peptide spans 1–50; that stretch reads MASLATVAAVKPSAAIKGLGGSSLAGAKLSIKPSRLSFKPKSIRANGVVA. The helical transmembrane segment at 102–118 threads the bilayer; that stretch reads LLLKFLILGGGSLLTYV.

This sequence belongs to the psaH family.

The protein resides in the plastid. Its subcellular location is the chloroplast thylakoid membrane. Functionally, possible role could be the docking of the LHC I antenna complex to the core complex. The chain is Photosystem I reaction center subunit VI-1, chloroplastic (PSAH1) from Arabidopsis thaliana (Mouse-ear cress).